Here is a 160-residue protein sequence, read N- to C-terminus: Putative pre-16S rRNA nuclease (160 aa).

This sequence belongs to the YqgF nuclease family.

The protein localises to the cytoplasm. Could be a nuclease involved in processing of the 5'-end of pre-16S rRNA. This chain is Putative pre-16S rRNA nuclease, found in Cereibacter sphaeroides (strain KD131 / KCTC 12085) (Rhodobacter sphaeroides).